The chain runs to 867 residues: Mitochondrial escape protein 2 (867 aa).

The N-terminal 25 residues, 1 to 25, are a transit peptide targeting the mitochondrion; the sequence is MIIRTLRSQLRLPKPVYISPPCRYY. The Mitochondrial matrix segment spans residues 26-279; the sequence is STDLEKLKKE…LVSLISNHTK (254 aa). In terms of domain architecture, RRM spans 179 to 264; that stretch reads GTPWIEDLRR…TTLHIQFVAI (86 aa). A helical transmembrane segment spans residues 280 to 300; the sequence is IAIPVLIALLATFAVLIFDPI. Residues 301–867 are Mitochondrial intermembrane-facing; that stretch reads REWFIEYKIL…DGKSFLGIKF (567 aa). Residues 795-852 adopt a coiled-coil conformation; that stretch reads IGRLISLEAAKIQKLEEELEKIYKIGKVDGRIDYVSQKIEASNKKILDLEKQAADVAS.

Belongs to the YME2 family.

It is found in the mitochondrion inner membrane. Plays a role in maintaining the mitochondrial genome and in controlling the mtDNA escape. Involved in the regulation of mtDNA nucleotide structure and number. May have a dispensable role in early maturation of pre-rRNA. In Candida albicans (strain SC5314 / ATCC MYA-2876) (Yeast), this protein is Mitochondrial escape protein 2 (PRP13).